A 786-amino-acid chain; its full sequence is Probable glutamine--tRNA ligase (786 aa).

Residues aspartate 181 to lysine 198 are compositionally biased toward basic and acidic residues. Positions aspartate 181–glutamate 218 are disordered. The 'HIGH' region motif lies at proline 276 to histidine 286. Residues glutamate 277–asparagine 279 and histidine 283–alanine 289 contribute to the ATP site. 2 residues coordinate L-glutamine: aspartate 309 and tyrosine 444. ATP-binding positions include threonine 463, arginine 492 to leucine 493, and valine 500 to lysine 502. Positions valine 499–arginine 503 match the 'KMSKS' region motif.

Belongs to the class-I aminoacyl-tRNA synthetase family.

It carries out the reaction tRNA(Gln) + L-glutamine + ATP = L-glutaminyl-tRNA(Gln) + AMP + diphosphate. The protein is Probable glutamine--tRNA ligase of Caenorhabditis elegans.